The sequence spans 185 residues: Photosystem I assembly protein Ycf4 (185 aa).

The next 3 membrane-spanning stretches (helical) occupy residues 22 to 42 (FFFASIILGGALGFLLVGFSS), 57 to 77 (ILFVPQGIVMCFYGIAGLFFS), and 101 to 121 (FYVFFAGVSQGKIVVFFLRVP).

This sequence belongs to the Ycf4 family.

It localises to the plastid. The protein localises to the chloroplast thylakoid membrane. Its function is as follows. Seems to be required for the assembly of the photosystem I complex. In Gnetum parvifolium (Small-leaved jointfir), this protein is Photosystem I assembly protein Ycf4.